We begin with the raw amino-acid sequence, 726 residues long: Penicillin-binding protein 1A (726 aa).

Over 1–3 (MKK) the chain is Cytoplasmic. A helical; Signal-anchor for type II membrane protein membrane pass occupies residues 4-24 (LVIGILGIVIALFVGLLVFLI). The Periplasmic portion of the chain corresponds to 25–726 (PIYKNLPDPK…SDLNAILGLR (702 aa)). The transglycosylase stretch occupies residues 45–213 (SEVYDAKGRL…AKYNPFYHPE (169 aa)). Residue glutamate 83 is the Proton donor; for transglycosylase activity of the active site. The segment at 379-662 (KYLGGNRAEI…SRVALPIWID (284 aa)) is transpeptidase. Catalysis depends on serine 432, which acts as the Acyl-ester intermediate; for transpeptidase activity.

This sequence in the N-terminal section; belongs to the glycosyltransferase 51 family. It in the C-terminal section; belongs to the transpeptidase family.

Its subcellular location is the cell inner membrane. It carries out the reaction [GlcNAc-(1-&gt;4)-Mur2Ac(oyl-L-Ala-gamma-D-Glu-L-Lys-D-Ala-D-Ala)](n)-di-trans,octa-cis-undecaprenyl diphosphate + beta-D-GlcNAc-(1-&gt;4)-Mur2Ac(oyl-L-Ala-gamma-D-Glu-L-Lys-D-Ala-D-Ala)-di-trans,octa-cis-undecaprenyl diphosphate = [GlcNAc-(1-&gt;4)-Mur2Ac(oyl-L-Ala-gamma-D-Glu-L-Lys-D-Ala-D-Ala)](n+1)-di-trans,octa-cis-undecaprenyl diphosphate + di-trans,octa-cis-undecaprenyl diphosphate + H(+). It catalyses the reaction Preferential cleavage: (Ac)2-L-Lys-D-Ala-|-D-Ala. Also transpeptidation of peptidyl-alanyl moieties that are N-acyl substituents of D-alanine.. It participates in cell wall biogenesis; peptidoglycan biosynthesis. The protein is Penicillin-binding protein 1A (mrcA) of Aquifex aeolicus (strain VF5).